An 827-amino-acid chain; its full sequence is Glycerol-3-phosphate acyltransferase (827 aa).

An HXXXXD motif motif is present at residues 325–330 (CHRSHM).

This sequence belongs to the GPAT/DAPAT family.

Its subcellular location is the cell inner membrane. It carries out the reaction sn-glycerol 3-phosphate + an acyl-CoA = a 1-acyl-sn-glycero-3-phosphate + CoA. Its pathway is phospholipid metabolism; CDP-diacylglycerol biosynthesis; CDP-diacylglycerol from sn-glycerol 3-phosphate: step 1/3. This chain is Glycerol-3-phosphate acyltransferase, found in Shigella dysenteriae serotype 1 (strain Sd197).